A 262-amino-acid polypeptide reads, in one-letter code: 5'-nucleotidase SurE (262 aa).

Aspartate 8, aspartate 9, serine 39, and asparagine 91 together coordinate a divalent metal cation.

Belongs to the SurE nucleotidase family. A divalent metal cation is required as a cofactor.

It localises to the cytoplasm. The enzyme catalyses a ribonucleoside 5'-phosphate + H2O = a ribonucleoside + phosphate. Its function is as follows. Nucleotidase that shows phosphatase activity on nucleoside 5'-monophosphates. This Geobacter sulfurreducens (strain ATCC 51573 / DSM 12127 / PCA) protein is 5'-nucleotidase SurE.